A 123-amino-acid chain; its full sequence is WAP four-disulfide core domain protein 5 (123 aa).

An N-terminal signal peptide occupies residues 1–24 (MRIQSLLLLGALLAVGSQPPAAFG). WAP domains follow at residues 27–73 (KGEK…CVPR) and 74–121 (VSVK…RDPV). Cystine bridges form between cysteine 34–cysteine 62, cysteine 41–cysteine 66, cysteine 49–cysteine 61, cysteine 55–cysteine 70, cysteine 81–cysteine 109, cysteine 88–cysteine 113, cysteine 96–cysteine 108, and cysteine 102–cysteine 117.

It localises to the secreted. In terms of biological role, putative acid-stable proteinase inhibitor. The polypeptide is WAP four-disulfide core domain protein 5 (WFDC5) (Aotus nancymaae (Ma's night monkey)).